Here is a 220-residue protein sequence, read N- to C-terminus: uncharacterized protein (220 aa).

The segment at 1–50 is disordered; sequence MTDDVRDVNTETTDATEVAEIDSAAGEAGDSATEAFDTDSATESTAQKGQ. Over residues 39-48 the composition is skewed to polar residues; it reads DSATESTAQK. A helical transmembrane segment spans residues 65-85; that stretch reads VPVILILLMLISGGATGWLYL.

This sequence to M.tuberculosis Rv1363c.

The protein localises to the membrane. This is an uncharacterized protein from Mycobacterium tuberculosis (strain CDC 1551 / Oshkosh).